We begin with the raw amino-acid sequence, 138 residues long: Probable prefoldin subunit 4 (138 aa).

It belongs to the prefoldin subunit beta family. In terms of assembly, heterohexamer of two PFD-alpha type and four PFD-beta type subunits.

Functionally, binds specifically to cytosolic chaperonin (c-CPN) and transfers target proteins to it. Binds to nascent polypeptide chain and promotes folding in an environment in which there are many competing pathways for nonnative proteins. This Drosophila melanogaster (Fruit fly) protein is Probable prefoldin subunit 4.